We begin with the raw amino-acid sequence, 313 residues long: Cyclin-dependent kinase B2-1 (313 aa).

Met-1 bears the N-acetylmethionine mark. The region spanning 14–304 (FEKLEKVGEG…AKMAMEHPYF (291 aa)) is the Protein kinase domain. ATP-binding positions include 20-28 (VGEGTYGKV) and Lys-43. At Tyr-25 the chain carries Phosphotyrosine. The Proton acceptor role is filled by Asp-145. Thr-179 is subject to Phosphothreonine.

This sequence belongs to the protein kinase superfamily. CMGC Ser/Thr protein kinase family. CDC2/CDKX subfamily. As to quaternary structure, interacts with CYCD4-1 and CKS1. Expressed in root tips, shoot apical meristem, leaf primordia vascular tissues and tapetum of anthers.

It catalyses the reaction L-seryl-[protein] + ATP = O-phospho-L-seryl-[protein] + ADP + H(+). It carries out the reaction L-threonyl-[protein] + ATP = O-phospho-L-threonyl-[protein] + ADP + H(+). The enzyme catalyses [DNA-directed RNA polymerase] + ATP = phospho-[DNA-directed RNA polymerase] + ADP + H(+). The protein is Cyclin-dependent kinase B2-1 (CDKB2-1) of Arabidopsis thaliana (Mouse-ear cress).